Here is a 124-residue protein sequence, read N- to C-terminus: UPF0292 protein AF_0905 (124 aa).

One can recognise a Toprim domain in the interval 21–98 (GWVVVVEGKK…IPDVEIKRKI (78 aa)). Residues glutamate 27, aspartate 67, and aspartate 69 each contribute to the Mg(2+) site.

This sequence belongs to the UPF0292 family. Mg(2+) is required as a cofactor.

The polypeptide is UPF0292 protein AF_0905 (Archaeoglobus fulgidus (strain ATCC 49558 / DSM 4304 / JCM 9628 / NBRC 100126 / VC-16)).